Here is a 263-residue protein sequence, read N- to C-terminus: 5'-nucleotidase SurE (263 aa).

A divalent metal cation is bound by residues aspartate 10, aspartate 11, serine 41, and asparagine 95.

It belongs to the SurE nucleotidase family. Requires a divalent metal cation as cofactor.

It localises to the cytoplasm. The enzyme catalyses a ribonucleoside 5'-phosphate + H2O = a ribonucleoside + phosphate. Its function is as follows. Nucleotidase that shows phosphatase activity on nucleoside 5'-monophosphates. The chain is 5'-nucleotidase SurE from Methanoculleus marisnigri (strain ATCC 35101 / DSM 1498 / JR1).